A 2254-amino-acid chain; its full sequence is Genome polyprotein (2254 aa).

One can recognise an SF3 helicase domain in the interval 438 to 592 (QTTINELAQL…EQWLVDNPGR (155 aa)). 464-471 (GPPGIGKT) contacts ATP. Tyr956 carries the post-translational modification O-(5'-phospho-RNA)-tyrosine. The Peptidase C24 domain maps to 1041-1196 (GDTYDSEGRG…KKLVSRVQTK (156 aa)). Active-site for 3CLpro activity residues include His1078, Asp1099, and Cys1163. The RdRp catalytic domain maps to 1434-1559 (RVLYCLDYSK…GLTPATASIM (126 aa)). Residues 1714–1742 (PAPTRSVASNPEGTQNSNESRPVQPAGPM) form a disordered region. A compositionally biased stretch (polar residues) spans 1719–1734 (SVASNPEGTQNSNESR).

As to quaternary structure, homodimer. Homomultimer. Interacts with host IEF4E; this interaction plays a role in translation of viral proteins. In terms of processing, specific enzymatic cleavages in vivo yield mature proteins. Pro-Pol is first autocatalytically cleaved, then processes the whole polyprotein. Post-translationally, VPg is uridylylated by the polymerase and is covalently attached to the 5'-end of the polyadenylated genomic and subgenomic RNAs. This uridylylated form acts as a nucleotide-peptide primer for the polymerase.

It localises to the virion. The protein localises to the host cytoplasm. It carries out the reaction a ribonucleoside 5'-triphosphate + H2O = a ribonucleoside 5'-diphosphate + phosphate + H(+). The enzyme catalyses RNA(n) + a ribonucleoside 5'-triphosphate = RNA(n+1) + diphosphate. It catalyses the reaction Endopeptidase with a preference for cleavage when the P1 position is occupied by Glu-|-Xaa and the P1' position is occupied by Gly-|-Yaa.. In terms of biological role, together with NTPase and NS4, initiates the formation of the replication complex. Induces the proliferation of the host smooth ER membranes forming long tubular structures. These remodeled membranes probably form the viral factories that contain the replication complex. Functionally, displays NTPase activity, but no helicase activity. Induces the formation of convoluted membranes derived from the host ER. These remodeled membranes probably form the viral factories that contain the replication complex. Together with NS2 and NS4, initiates the formation of the replication complex. Probable key protein responsible for the formation of membrane alterations by the virus. Induces the formation of convoluted membranes derived from the host ER. These remodeled membranes probably form the viral factories that contain the replication complex. Together with NS2 and NTPase, initiates the formation of the replication complex. Its function is as follows. Viral genome-linked protein is covalently linked to the 5'-end of the positive-strand, negative-strand genomic RNAs and subgenomic RNA. Acts as a genome-linked replication primer. May recruit ribosome to viral RNA thereby promoting viral proteins translation. Interacts with host translation initiation complex to allow the translation of viral proteins. In terms of biological role, protease-polymerase p76 processes the polyprotein: Pro-Pol is first released by autocleavage, then all other proteins are cleaved. Cleaves host translation initiation factor eIF4G1, eIF4G2 and PABP1 thereby inducing a shutdown of host protein synthesis. This shutdown may not prevent viral mRNA from being translated since viral Vpg replaces the cap. It is also an RNA-directed RNA polymerase which replicates genomic and antigenomic viral RNA by recognizing specific signals. Also transcribes a subgenomic mRNA by initiating RNA synthesis internally on antigenomic RNA. This sgRNA codes for structural proteins. Catalyzes the covalent attachment VPg with viral RNAs. Functionally, capsid protein self assembles to form an icosahedral capsid with a T=3 symmetry, about 38 nm in diameter, and consisting of 180 capsid proteins. The capsid encapsulate the genomic RNA and VP2 proteins. Attaches virion to target cells, inducing endocytosis of the viral particle. Acidification of the endosome induces conformational change of capsid protein thereby injecting virus genomic RNA into host cytoplasm. This is Genome polyprotein from Porcine enteric sapovirus (isolate Swine/United States/Cowden/1980) (Sw/SV/Cowden/1980/US).